Reading from the N-terminus, the 98-residue chain is Small ribosomal subunit protein uS19 (98 aa).

The segment at 77–98 is disordered; that stretch reads TRTYRGHAGGKAEKGGAAPKRK.

This sequence belongs to the universal ribosomal protein uS19 family.

Protein S19 forms a complex with S13 that binds strongly to the 16S ribosomal RNA. This chain is Small ribosomal subunit protein uS19, found in Chlorobium phaeovibrioides (strain DSM 265 / 1930) (Prosthecochloris vibrioformis (strain DSM 265)).